The primary structure comprises 509 residues: Glycogen synthase 2 (509 aa).

An ADP-alpha-D-glucose-binding site is contributed by lysine 15.

It belongs to the glycosyltransferase 1 family. Bacterial/plant glycogen synthase subfamily.

The catalysed reaction is [(1-&gt;4)-alpha-D-glucosyl](n) + ADP-alpha-D-glucose = [(1-&gt;4)-alpha-D-glucosyl](n+1) + ADP + H(+). The protein operates within glycan biosynthesis; glycogen biosynthesis. Its function is as follows. Synthesizes alpha-1,4-glucan chains using ADP-glucose. This chain is Glycogen synthase 2 (glgA2), found in Agrobacterium fabrum (strain C58 / ATCC 33970) (Agrobacterium tumefaciens (strain C58)).